A 381-amino-acid chain; its full sequence is MSQLPIRYEFIKSCKQTGARLGRVHTPHGSFDTPVFMPVGTLATVKTMAPEELKAMEAGIILSNTYHLWLRPGHDIVKEAGGLHKFMNWDRAILTDSGGFQVFSLSEFRKIEEEGVHFRNHLNGDKLFLSPEKAMDIQNALGSDIMMAFDECPPYPAEYDYMKRSVERTSRWAERCLTAHQRPEDQGLFGIIQGGEYEELRKQSAKDLVSLDFPGYAIGGLSVGEPKDVMNRVLEFTTPLLPADKPRYLMGVGSPDSLIDGAIRGVDMFDCVLPTRIARNGTLMTSEGRLVVKNAKYERDFRPIDENCDCYTCKNYTRAYIRHLIKTNETFGIRLTTYHNLHFLLKLMEQVREAIREDRLGDFKEEFFERYGFNEPNAKNF.

The active-site Proton acceptor is the aspartate 96. Substrate contacts are provided by residues 96–100, aspartate 150, glutamine 193, and glycine 220; that span reads DSGGF. The RNA binding stretch occupies residues 251–257; it reads GVGSPDS. Aspartate 270 functions as the Nucleophile in the catalytic mechanism. Residues 275–279 are RNA binding; important for wobble base 34 recognition; sequence TRIAR. Positions 308, 310, 313, and 339 each coordinate Zn(2+).

It belongs to the queuine tRNA-ribosyltransferase family. Homodimer. Within each dimer, one monomer is responsible for RNA recognition and catalysis, while the other monomer binds to the replacement base PreQ1. It depends on Zn(2+) as a cofactor.

It carries out the reaction 7-aminomethyl-7-carbaguanine + guanosine(34) in tRNA = 7-aminomethyl-7-carbaguanosine(34) in tRNA + guanine. It participates in tRNA modification; tRNA-queuosine biosynthesis. Catalyzes the base-exchange of a guanine (G) residue with the queuine precursor 7-aminomethyl-7-deazaguanine (PreQ1) at position 34 (anticodon wobble position) in tRNAs with GU(N) anticodons (tRNA-Asp, -Asn, -His and -Tyr). Catalysis occurs through a double-displacement mechanism. The nucleophile active site attacks the C1' of nucleotide 34 to detach the guanine base from the RNA, forming a covalent enzyme-RNA intermediate. The proton acceptor active site deprotonates the incoming PreQ1, allowing a nucleophilic attack on the C1' of the ribose to form the product. After dissociation, two additional enzymatic reactions on the tRNA convert PreQ1 to queuine (Q), resulting in the hypermodified nucleoside queuosine (7-(((4,5-cis-dihydroxy-2-cyclopenten-1-yl)amino)methyl)-7-deazaguanosine). The chain is Queuine tRNA-ribosyltransferase from Bacillus pumilus (strain SAFR-032).